The chain runs to 1173 residues: 3-hydroxy-3-methylglutaryl coenzyme A reductase mlcD (1173 aa).

2 N-linked (GlcNAc...) asparagine glycosylation sites follow: Asn143 and Asn186. The SSD domain occupies 241 to 420; the sequence is DVVVMVLGYI…FTFYTAILSI (180 aa). Helical transmembrane passes span 242–262, 272–292, 302–322, 368–388, 397–417, 479–499, and 594–614; these read VVVM…LFLS, LATS…DVAI, LLSE…SITL, NIVC…VLGI, VLAA…YTAI, FWMV…TLFQ, and VLSK…SYLF. The interval 498-673 is linker; the sequence is FQASSSGSLS…FTPTTTDSDS (176 aa). Positions 647–666 are enriched in polar residues; the sequence is NQTPQIQSSLQAPQTRVFTP. The disordered stretch occupies residues 647–669; the sequence is NQTPQIQSSLQAPQTRVFTPTTT. Residues 674–1133 form a catalytic region; that stretch reads DASLVLIKAS…LVKAHMAHNR (460 aa). The Charge relay system role is filled by Glu822. A glycan (N-linked (GlcNAc...) asparagine) is linked at Asn886. Lys956 functions as the Charge relay system in the catalytic mechanism. Asn997 carries N-linked (GlcNAc...) asparagine glycosylation. Asp1032 acts as the Charge relay system in catalysis. The Proton donor role is filled by His1128. Asn1132 carries an N-linked (GlcNAc...) asparagine glycan. The disordered stretch occupies residues 1132–1173; sequence NRSAPASSAPSRSVSPSGGTRTVPVPNNALRPSAAATDRARR. The segment covering 1133 to 1148 has biased composition (low complexity); that stretch reads RSAPASSAPSRSVSPS.

It belongs to the HMG-CoA reductase family.

Its subcellular location is the endoplasmic reticulum membrane. It carries out the reaction (R)-mevalonate + 2 NADP(+) + CoA = (3S)-3-hydroxy-3-methylglutaryl-CoA + 2 NADPH + 2 H(+). It functions in the pathway polyketide biosynthesis. Functionally, HMG-CoA reductase; part of the gene cluster that mediates the biosynthesis of compactin, also known as mevastatin or ML-236B, and which acts as a potent competitive inhibitor of HMG-CoA reductase. Compactin biosynthesis is performed in two stages. The first stage is catalyzed by the nonaketide synthase mlcA, which belongs to type I polyketide synthases and catalyzes the iterative nine-step formation of the polyketide. This PKS stage is completed by the action of dehydrogenase mlcG, which catalyzes the NADPH-dependent reduction of the unsaturated tetra-, penta- and heptaketide intermediates that arise during the mlcA-mediated biosynthesis of the nonaketide chain and leads to dihydro-ML-236C carboxylate. Covalently bound dihydro-ML-236C carboxylate is released from mlcA by the mlcF esterase. Conversion of dihydro-ML-236C carboxylate into ML-236A carboxylate is subsequently performed with the participation of molecular oxygen and P450 monoogygenase mlcC. Finally, mlcH performs the conversion of ML-236A carboxylate to ML-236B/compactin carboxylate through the addition of the side-chain diketide moiety produced by the diketide synthase mlcB. HMG-CoA reductase mlcD may act as a down-regulator of compactin production and is involved in conferring resistance to ML-236B/compactin. In Penicillium citrinum, this protein is 3-hydroxy-3-methylglutaryl coenzyme A reductase mlcD.